Consider the following 484-residue polypeptide: Tyramine receptor 1 (484 aa).

Residues 1–54 (MVRVELQAASLMNGSSAAEEPQDALVGGDACGGRRPPSVLGVRLAVPEWEVAVT) lie on the Extracellular side of the membrane. N-linked (GlcNAc...) asparagine glycosylation is present at Asn13. Residues 55-77 (AVSLSLIILITIVGNVLVVLSVF) traverse the membrane as a helical segment. At 78 to 87 (TYKPLRIVQN) the chain is on the cytoplasmic side. The helical transmembrane segment at 88-109 (FFIVSLAVADLTVAVLVMPFNV) threads the bilayer. Over 110–126 (AYSLIQRWVFGIVVCKM) the chain is Extracellular. Cys124 and Cys203 are disulfide-bonded. A helical membrane pass occupies residues 127 to 147 (WLTCDVLCCTASILNLCAIAL). The Cytoplasmic segment spans residues 148–167 (DRYWAITDPINYAQKRTLRR). The helical transmembrane segment at 168-190 (VLAMIAGVWLLSGVISSPPLIGW) threads the bilayer. At 191-215 (NDWPMEFNDTTPCQLTEEQGYVIYS) the chain is on the extracellular side. Asn198 is a glycosylation site (N-linked (GlcNAc...) asparagine). A helical transmembrane segment spans residues 216 to 237 (SLGSFFIPLFIMTIVYVEIFIA). The Cytoplasmic segment spans residues 238–411 (TKRRLRERAK…LSKERRAART (174 aa)). Over residues 253 to 280 (SAMKQQMAAQAVPSSVPSHDQESVSSET) the composition is skewed to polar residues. 2 disordered regions span residues 253–322 (SAMK…PAMV) and 358–383 (TTTAVTDSPRSRTASQKGSTAPPTPV). Residues 295-306 (EKRRKTKKKSKK) show a composition bias toward basic residues. The span at 361–378 (AVTDSPRSRTASQKGSTA) shows a compositional bias: polar residues. Residues 412 to 433 (LGIIMGVFVVCWLPFFLMYVIV) traverse the membrane as a helical segment. Over 434-448 (PFCNPSCKPSPKLVN) the chain is Extracellular. The chain crosses the membrane as a helical span at residues 449–470 (FITWLGYINSALNPIIYTIFNL). Over 471–484 (DFRRAFKKLLHFKT) the chain is Cytoplasmic.

It belongs to the G-protein coupled receptor 1 family. As to expression, present mainly in the central nervous system, especially in the supra- and subesophageal, thoracic and abdominal ganglia. Not found in the distal part of optic lobes.

The protein resides in the cell membrane. Functionally, G-protein coupled receptor for tyramine, a known neurotransmitter and neuromodulator and direct precursor of octopamine. The rank order of potency for agonists of this receptor is tyramine &gt; naphazoline &gt; tolazoline &gt; DL-octopamine &gt; dopamine &gt; epinephrine &gt; 5-hydroxytryptamine. For antagonists, the rank order is yohimbine &gt; chlorpromazine &gt; mianserin &gt; phentolamine &gt; metoclopramide. This chain is Tyramine receptor 1 (GCR1), found in Locusta migratoria (Migratory locust).